The chain runs to 233 residues: Orotate phosphoribosyltransferase (233 aa).

5-phospho-alpha-D-ribose 1-diphosphate is bound at residue lysine 29. Orotate is bound at residue 37 to 38 (FF). Residues 79 to 80 (YK), arginine 109, lysine 110, lysine 113, histidine 115, and 135 to 143 (DDVITAGTA) contribute to the 5-phospho-alpha-D-ribose 1-diphosphate site. Residues threonine 139 and arginine 167 each coordinate orotate.

This sequence belongs to the purine/pyrimidine phosphoribosyltransferase family. PyrE subfamily. Homodimer.

The enzyme catalyses orotidine 5'-phosphate + diphosphate = orotate + 5-phospho-alpha-D-ribose 1-diphosphate. Its pathway is pyrimidine metabolism; UMP biosynthesis via de novo pathway; UMP from orotate: step 1/2. In terms of biological role, catalyzes the transfer of a ribosyl phosphate group from 5-phosphoribose 1-diphosphate to orotate, leading to the formation of orotidine monophosphate (OMP). The sequence is that of Orotate phosphoribosyltransferase (ura-5) from Neurospora crassa (strain ATCC 24698 / 74-OR23-1A / CBS 708.71 / DSM 1257 / FGSC 987).